The following is a 535-amino-acid chain: Ribonuclease Y (535 aa).

Residues 30–50 (IWALPALVIGLAIGAGIGILI) form a helical membrane-spanning segment. Positions 225-285 (TVSTVALPSE…VRREVARLAL (61 aa)) constitute a KH domain. The region spanning 351-444 (VLQHSLECAL…VQAVDAISGG (94 aa)) is the HD domain.

It belongs to the RNase Y family.

The protein resides in the cell membrane. Functionally, endoribonuclease that initiates mRNA decay. The polypeptide is Ribonuclease Y (Roseiflexus sp. (strain RS-1)).